A 97-amino-acid chain; its full sequence is uncharacterized protein (97 aa).

The signal sequence occupies residues 1–21 (MLLHGLGRMNIIFICFPSLAC).

This is an uncharacterized protein from Schizosaccharomyces pombe (strain 972 / ATCC 24843) (Fission yeast).